The chain runs to 417 residues: 26S proteasome regulatory subunit RPN14 (417 aa).

WD repeat units follow at residues 134–173 (AHVSEITKLKFFPSGEALISSSQDMQLKIWSVKDGSNPRT), 176–215 (GHRATVTDIAIIDRGRNVLSASLDGTIRLWECGTGTTIHT), 242–281 (ISTSKKNNLEFGTYGKYVIAGHVSGVITVHNVFSKEQTIQ), 285–325 (KFTC…CPVG), 330–371 (NEGT…PAIE), and 380–416 (SNDDEVSQFCYVSDDESNGEVLEVGKNNFCALYNLSN).

This sequence belongs to the WD repeat PAAF1/RPN14 family. Associates with the 19S proteasome regulatory particle (RP). Interacts directly with RPT5 and RPT6.

It localises to the cytoplasm. Its subcellular location is the nucleus. In terms of biological role, acts as a regulatory subunit of the 26 proteasome which is involved in the ATP-dependent degradation of ubiquitinated proteins. Is not a genuine component of the 26S proteasome, but an auxiliary factor that interacts with the proteasomal ATPase of 19S regulatory particle (RP). Acts as a chaperone which regulates the highly structured assembly of the 19S regulatory particle. Involved in the substrate specificity of the 26S proteasome and is especially involved in the degradation of ubiquitinated GCN4. May contribute to the stability of the 26S proteasome in some stress conditions. This chain is 26S proteasome regulatory subunit RPN14 (RPN14), found in Saccharomyces cerevisiae (strain ATCC 204508 / S288c) (Baker's yeast).